The primary structure comprises 360 residues: RNA-binding protein 1 (360 aa).

Residues 6 to 82 (YKLFVGGIAK…KPVDVRKAIR (77 aa)) form the RRM 1 domain. A coiled-coil region spans residues 93–113 (MQFLERKVQQMNGGLREMSSN). The region spanning 120 to 197 (KKIFVGGLSS…KRVEVKRAIP (78 aa)) is the RRM 2 domain.

Highly expressed in inflorescences and roots. Detected in leaves and seedlings, but not in stems. Expressed in vegetative shoot apex and root meristem, but not in root cap. Detected in flower buds, junction of pedicels, joints of immature siliques and pistil.

In terms of biological role, RNA binding protein. Can also bind in vitro to single-stranded DNA. The chain is RNA-binding protein 1 (RBP1) from Arabidopsis thaliana (Mouse-ear cress).